The sequence spans 426 residues: Histidine--tRNA ligase (426 aa).

Belongs to the class-II aminoacyl-tRNA synthetase family. In terms of assembly, homodimer.

It localises to the cytoplasm. It catalyses the reaction tRNA(His) + L-histidine + ATP = L-histidyl-tRNA(His) + AMP + diphosphate + H(+). This chain is Histidine--tRNA ligase, found in Lactiplantibacillus plantarum (strain ATCC BAA-793 / NCIMB 8826 / WCFS1) (Lactobacillus plantarum).